A 224-amino-acid polypeptide reads, in one-letter code: dTTP/UTP pyrophosphatase (224 aa).

D77 acts as the Proton acceptor in catalysis.

It belongs to the Maf family. YhdE subfamily. The cofactor is a divalent metal cation.

The protein resides in the cytoplasm. The catalysed reaction is dTTP + H2O = dTMP + diphosphate + H(+). It catalyses the reaction UTP + H2O = UMP + diphosphate + H(+). Its function is as follows. Nucleoside triphosphate pyrophosphatase that hydrolyzes dTTP and UTP. May have a dual role in cell division arrest and in preventing the incorporation of modified nucleotides into cellular nucleic acids. The polypeptide is dTTP/UTP pyrophosphatase (Dehalococcoides mccartyi (strain ATCC BAA-2100 / JCM 16839 / KCTC 5957 / BAV1)).